The primary structure comprises 409 residues: MDSNFIFGIGAFTAIVLVLAVVILIAKSKLVDSGDITISINNDPEKAITLPAGGKLLGALASKGIFVSSACGGGGSCGQCKVKVKSGGGEILPTELSHISKKEAKEGWRLSCQVNVKSSMDVELPEEVFGVKKWECTVISNDNKATFIKELKLAIPEGEEVPFRAGGYIQIEAEPHTVNYKDFDIPEEYHEDWDKFNLWRYVSKVDEHIIRAYSMASYPEEKGIIMLNVRIATPPPRNPDVPPGQMSSYIWSLKPGDKVTISGPFGEFFAKDTDAEMVFIGGGAGMAPMRSHIFDQLKRLHSKRKISFWYGARSKREMFYVEDFDQLQAENDNFTWHVALSDPLPEDNWDGYTGFIHNVLYENYLKNHEAPEDCEYYMCGPPVMNAAVINMLESLGVEHENILLDDFGG.

The chain crosses the membrane as a helical span at residues 5 to 25 (FIFGIGAFTAIVLVLAVVILI). The 95-residue stretch at 34-128 (GDITISINND…SMDVELPEEV (95 aa)) folds into the 2Fe-2S ferredoxin-type domain. [2Fe-2S] cluster is bound by residues Cys-71, Cys-77, Cys-80, and Cys-112. The FAD-binding FR-type domain maps to 131–271 (VKKWECTVIS…SGPFGEFFAK (141 aa)).

It belongs to the NqrF family. In terms of assembly, composed of six subunits; NqrA, NqrB, NqrC, NqrD, NqrE and NqrF. [2Fe-2S] cluster is required as a cofactor. It depends on FAD as a cofactor.

The protein localises to the cell inner membrane. It catalyses the reaction a ubiquinone + n Na(+)(in) + NADH + H(+) = a ubiquinol + n Na(+)(out) + NAD(+). Its function is as follows. NQR complex catalyzes the reduction of ubiquinone-1 to ubiquinol by two successive reactions, coupled with the transport of Na(+) ions from the cytoplasm to the periplasm. The first step is catalyzed by NqrF, which accepts electrons from NADH and reduces ubiquinone-1 to ubisemiquinone by a one-electron transfer pathway. This Mannheimia succiniciproducens (strain KCTC 0769BP / MBEL55E) protein is Na(+)-translocating NADH-quinone reductase subunit F.